The primary structure comprises 1248 residues: Period circadian protein homolog 2 (1248 aa).

The tract at residues 1 to 57 is disordered; that stretch reads MNGYVEFSPSPTKESVEPQPSQAVLQEDVDMSSGSSGHENCSMGRDSQGSDCDDNGK. 2 stretches are compositionally biased toward polar residues: residues 9–24 and 32–50; these read PSPT…SQAV and SSGS…SQGS. The short motif at 105–114 is the Nuclear export signal 1 element; sequence LIRTLRELKV. The region spanning 175 to 242 is the PAS 1 domain; the sequence is ITSEYIVKNA…FHSYTTPYKL (68 aa). The LXXLL signature appears at 302–306; it reads LCCLL. In terms of domain architecture, PAS 2 spans 315–381; that stretch reads YEAPRIPPEK…MLAIHKKILQ (67 aa). The region spanning 389 to 432 is the PAC domain; it reads YSPIRFRARNGEYITLDTSWSSFINPWSRKISFIIGRHKVRVGP. A Nuclear export signal 2 motif is present at residues 456-465; the sequence is LTEQIHRLLM. Disordered regions lie at residues 467–563 and 619–638; these read PVPH…SLPK and VSPG…VSSH. The important for protein stability stretch occupies residues 474–478; the sequence is SGYGS. A CSNK1E binding domain region spans residues 506-706; that stretch reads RKSGISKNGS…GAPGGLSQEK (201 aa). The span at 510-521 shows a compositional bias: polar residues; the sequence is ISKNGSKTQTRS. Phosphoserine is present on residues serine 521, serine 524, serine 527, and serine 540. Basic and acidic residues predominate over residues 523–534; sequence FSHESGEQKEIA. Residues serine 656, serine 690, serine 694, serine 703, and serine 755 each carry the phosphoserine modification. Disordered regions lie at residues 675-708 and 751-829; these read DKKP…EKGP and RAQA…PSAP. The short motif at 773–789 is the Nuclear localization signal element; sequence KKTGKNRKLKSKRVKTR. Residues 774 to 787 show a composition bias toward basic residues; that stretch reads KTGKNRKLKSKRVK. Residues 816–827 show a composition bias toward low complexity; it reads SPSDTSQSSCPS. Positions 873-1058 are interaction with PPARG; the sequence is DFAVQPLPLA…DLCSATGSAL (186 aa). Phosphoserine is present on serine 930. Positions 950-971 are disordered; sequence TPPAATVTSGRASPPLFQSRGS. A Phosphothreonine modification is found at threonine 955. Serine 962 carries the phosphoserine modification. The Nuclear export signal 3 signature appears at 974 to 981; it reads LQLNLLQL. A disordered region spans residues 984–1035; the sequence is APEGSTGAAGTSGTTGTAAAGLDCTPGTSRDRQPKAPSTCKEPSDTQNSDAL. Low complexity predominate over residues 987–1004; that stretch reads GSTGAAGTSGTTGTAAAG. The LXXLL motif lies at 1042–1046; it reads LNLLL. Over residues 1057–1080 the composition is skewed to low complexity; that stretch reads ALSGSGASATSDSLGSGSLGCDAS. The interval 1057–1113 is disordered; that stretch reads ALSGSGASATSDSLGSGSLGCDASRSGAGSSDTSHTSKYFGSIDSSENNHKAKVSTD. Residues 1083-1102 show a composition bias toward polar residues; that stretch reads GAGSSDTSHTSKYFGSIDSS. Residues 1103-1112 are compositionally biased toward basic and acidic residues; the sequence is ENNHKAKVST. A Phosphoserine modification is found at serine 1117. The CRY binding domain stretch occupies residues 1148–1248; the sequence is SRDLESVLRE…LTGPRIEAQT (101 aa). The tract at residues 1215–1248 is disordered; it reads PYEEDSPSPGLCDTSEAKEEEGEQLTGPRIEAQT.

In terms of assembly, homodimer. Component of the circadian core oscillator, which includes the CRY proteins, CLOCK or NPAS2, BMAL1 or BMAL2, CSNK1D and/or CSNK1E, TIMELESS, and the PER proteins. Interacts with CLOCK-BMAL1 (off DNA). Interacts with BMAL2. Interacts directly with PER1 and PER3, and through a C-terminal domain, with CRY1 and CRY2. Interacts (via PAS 2 domain) with TIMELESS. Interacts with NFIL3. Different large complexes have been identified with different repressive functions. The core of PER complexes is composed of at least PER1, PER2, PER3, CRY1, CRY2, CSNK1D and/or CSNK1E. The large PER complex involved in the repression of transcriptional termination is composed of at least PER2, CDK9, DDX5, DHX9, NCBP1 and POLR2A (active). The large PER complex involved in the histone deacetylation is composed of at least HDAC1, PER2, SFPQ and SIN3A. The large PER complex involved in the histone methylation is composed of at least PER2, CBX3, TRIM28, SUV39H1 and/or SUV39H2; CBX3 mediates the formation of the complex. Interacts with SETX; the interaction inhibits termination of circadian target genes. Interacts with the nuclear receptors HNF4A, NR1D1, NR4A2, RORA, PPARA, PPARG and THRA; the interaction with at least PPARG is ligand dependent. Interacts with PML. Interacts (phosphorylated) with BTRC and FBXW11; the interactions trigger proteasomal degradation. Interacts with NONO and SFPQ. Interacts with PRKCDBP. Interacts with MAGEL2. Interacts with MAP1LC3B. Interacts with HNF4A. Acetylated. Deacetylated by SIRT1, resulting in decreased protein stability. Deacetylated by SIRT6, preventing its degradation by the proteasome, resulting in increased protein stability. In terms of processing, phosphorylated by CSNK1E and CSNK1D. Phosphorylation results in PER2 protein degradation. May be dephosphorylated by PP1. Post-translationally, ubiquitinated, leading to its proteasomal degradation. Ubiquitination may be inhibited by CRY1. In terms of tissue distribution, expressed in the brain, mainly in the suprachiasmatic nucleus (SCN). Expression also found in the harderian gland, lung, eye, intestine, liver and skeletal muscle.

The protein localises to the nucleus. It is found in the cytoplasm. The protein resides in the perinuclear region. In terms of biological role, transcriptional repressor which forms a core component of the circadian clock. The circadian clock, an internal time-keeping system, regulates various physiological processes through the generation of approximately 24 hour circadian rhythms in gene expression, which are translated into rhythms in metabolism and behavior. It is derived from the Latin roots 'circa' (about) and 'diem' (day) and acts as an important regulator of a wide array of physiological functions including metabolism, sleep, body temperature, blood pressure, endocrine, immune, cardiovascular, and renal function. Consists of two major components: the central clock, residing in the suprachiasmatic nucleus (SCN) of the brain, and the peripheral clocks that are present in nearly every tissue and organ system. Both the central and peripheral clocks can be reset by environmental cues, also known as Zeitgebers (German for 'timegivers'). The predominant Zeitgeber for the central clock is light, which is sensed by retina and signals directly to the SCN. The central clock entrains the peripheral clocks through neuronal and hormonal signals, body temperature and feeding-related cues, aligning all clocks with the external light/dark cycle. Circadian rhythms allow an organism to achieve temporal homeostasis with its environment at the molecular level by regulating gene expression to create a peak of protein expression once every 24 hours to control when a particular physiological process is most active with respect to the solar day. Transcription and translation of core clock components (CLOCK, NPAS2, BMAL1, BMAL2, PER1, PER2, PER3, CRY1 and CRY2) plays a critical role in rhythm generation, whereas delays imposed by post-translational modifications (PTMs) are important for determining the period (tau) of the rhythms (tau refers to the period of a rhythm and is the length, in time, of one complete cycle). A diurnal rhythm is synchronized with the day/night cycle, while the ultradian and infradian rhythms have a period shorter and longer than 24 hours, respectively. Disruptions in the circadian rhythms contribute to the pathology of cardiovascular diseases, cancer, metabolic syndrome and aging. A transcription/translation feedback loop (TTFL) forms the core of the molecular circadian clock mechanism. Transcription factors, CLOCK or NPAS2 and BMAL1 or BMAL2, form the positive limb of the feedback loop, act in the form of a heterodimer and activate the transcription of core clock genes and clock-controlled genes (involved in key metabolic processes), harboring E-box elements (5'-CACGTG-3') within their promoters. The core clock genes: PER1/2/3 and CRY1/2 which are transcriptional repressors form the negative limb of the feedback loop and interact with the CLOCK|NPAS2-BMAL1|BMAL2 heterodimer inhibiting its activity and thereby negatively regulating their own expression. This heterodimer also activates nuclear receptors NR1D1/2 and RORA/B/G, which form a second feedback loop and which activate and repress BMAL1 transcription, respectively. PER1 and PER2 proteins transport CRY1 and CRY2 into the nucleus with appropriate circadian timing, but also contribute directly to repression of clock-controlled target genes through interaction with several classes of RNA-binding proteins, helicases and others transcriptional repressors. PER appears to regulate circadian control of transcription by at least three different modes. First, interacts directly with the CLOCK-BMAL1 at the tail end of the nascent transcript peak to recruit complexes containing the SIN3-HDAC that remodel chromatin to repress transcription. Second, brings H3K9 methyltransferases such as SUV39H1 and SUV39H2 to the E-box elements of the circadian target genes, like PER2 itself or PER1. The recruitment of each repressive modifier to the DNA seems to be very precisely temporally orchestrated by the large PER complex, the deacetylases acting before than the methyltransferases. Additionally, large PER complexes are also recruited to the target genes 3' termination site through interactions with RNA-binding proteins and helicases that may play a role in transcription termination to regulate transcription independently of CLOCK-BMAL1 interactions. Recruitment of large PER complexes to the elongating polymerase at PER and CRY termination sites inhibited SETX action, impeding RNA polymerase II release and thereby repressing transcriptional reinitiation. May propagate clock information to metabolic pathways via the interaction with nuclear receptors. Coactivator of PPARA and corepressor of NR1D1, binds rhythmically at the promoter of nuclear receptors target genes like BMAL1 or G6PC1. Directly and specifically represses PPARG proadipogenic activity by blocking PPARG recruitment to target promoters and thereby transcriptional activation. Required for fatty acid and lipid metabolism, is involved as well in the regulation of circulating insulin levels. Plays an important role in the maintenance of cardiovascular functions through the regulation of NO and vasodilatatory prostaglandins production in aortas. Controls circadian glutamate uptake in synaptic vesicles through the regulation of VGLUT1 expression. May also be involved in the regulation of inflammatory processes. Represses the CLOCK-BMAL1 induced transcription of BHLHE40/DEC1 and ATF4. Negatively regulates the formation of the TIMELESS-CRY1 complex by competing with TIMELESS for binding to CRY1. The chain is Period circadian protein homolog 2 (PER2) from Spalax judaei (Judean Mountains blind mole rat).